The following is a 168-amino-acid chain: Chorismate pyruvate-lyase (168 aa).

Substrate-binding residues include M36, R78, L116, and E157.

It belongs to the UbiC family. In terms of assembly, monomer.

The protein resides in the cytoplasm. The enzyme catalyses chorismate = 4-hydroxybenzoate + pyruvate. It participates in cofactor biosynthesis; ubiquinone biosynthesis. Functionally, removes the pyruvyl group from chorismate, with concomitant aromatization of the ring, to provide 4-hydroxybenzoate (4HB) for the ubiquinone pathway. The chain is Chorismate pyruvate-lyase from Yersinia enterocolitica serotype O:8 / biotype 1B (strain NCTC 13174 / 8081).